A 116-amino-acid chain; its full sequence is NADH-ubiquinone oxidoreductase chain 3 (116 aa).

3 consecutive transmembrane segments (helical) span residues L3–F23, F56–L76, and L87–W107.

This sequence belongs to the complex I subunit 3 family.

Its subcellular location is the mitochondrion membrane. The catalysed reaction is a ubiquinone + NADH + 5 H(+)(in) = a ubiquinol + NAD(+) + 4 H(+)(out). Functionally, core subunit of the mitochondrial membrane respiratory chain NADH dehydrogenase (Complex I) that is believed to belong to the minimal assembly required for catalysis. Complex I functions in the transfer of electrons from NADH to the respiratory chain. The immediate electron acceptor for the enzyme is believed to be ubiquinone. The sequence is that of NADH-ubiquinone oxidoreductase chain 3 (MT-ND3) from Oncorhynchus gorbuscha (Pink salmon).